The sequence spans 772 residues: Semaphorin-3A (772 aa).

The N-terminal stretch at 1–20 is a signal peptide; it reads MGWFTGIACLFWGILLTARA. The Sema domain occupies 31 to 514; the sequence is RLKLSYKEML…STAGVAQLPL (484 aa). Asn53 carries an N-linked (GlcNAc...) asparagine glycan. A disulfide bridge connects residues Cys103 and Cys114. N-linked (GlcNAc...) asparagine glycosylation is present at Asn125. Intrachain disulfides connect Cys132–Cys141, Cys269–Cys381, Cys293–Cys341, and Cys517–Cys535. An Ig-like C2-type domain is found at 577 to 665; that stretch reads HGHSLEERII…GFMQTLLKVT (89 aa). An N-linked (GlcNAc...) asparagine glycan is attached at Asn591. Cys650 and Cys723 are disulfide-bonded. Residues 677–691 are compositionally biased toward basic and acidic residues; sequence LLHKDDDGDGSKTKE. Disordered stretches follow at residues 677 to 698 and 729 to 772; these read LLHKDDDGDGSKTKEMSSSMTP and RDRK…PRSV. Residues 729–738 show a composition bias toward basic residues; the sequence is RDRKQRRQRP. Residues 750–772 show a composition bias toward basic and acidic residues; sequence HMQESKKGRNRRTHEFERAPRSV.

It belongs to the semaphorin family. Interacts with PLXND1. As to expression, expressed in the dorsal root ganglia.

The protein localises to the secreted. In terms of biological role, may be involved in guiding growing axons towards their targets by forming a molecular boundary that instructs axons to engage in the formation of specific nerve tracts. Binds to neuropilin. Involved in the development of the olfactory system and in neuronal control of puberty. This is Semaphorin-3A (Sema3a) from Rattus norvegicus (Rat).